The chain runs to 451 residues: Tubulin beta-1 chain (451 aa).

Q11, E73, S142, G146, T147, G148, N208, and N230 together coordinate GTP. A Mg(2+)-binding site is contributed by E73. The disordered stretch occupies residues 430 to 451 (QEATADDEAEFEEEGEVEGEYA). Residues 433–451 (TADDEAEFEEEGEVEGEYA) are compositionally biased toward acidic residues.

The protein belongs to the tubulin family. As to quaternary structure, dimer of alpha and beta chains. A typical microtubule is a hollow water-filled tube with an outer diameter of 25 nm and an inner diameter of 15 nM. Alpha-beta heterodimers associate head-to-tail to form protofilaments running lengthwise along the microtubule wall with the beta-tubulin subunit facing the microtubule plus end conferring a structural polarity. Microtubules usually have 13 protofilaments but different protofilament numbers can be found in some organisms and specialized cells. The cofactor is Mg(2+).

The protein resides in the cytoplasm. Its subcellular location is the cytoskeleton. In terms of biological role, tubulin is the major constituent of microtubules, a cylinder consisting of laterally associated linear protofilaments composed of alpha- and beta-tubulin heterodimers. Microtubules grow by the addition of GTP-tubulin dimers to the microtubule end, where a stabilizing cap forms. Below the cap, tubulin dimers are in GDP-bound state, owing to GTPase activity of alpha-tubulin. The chain is Tubulin beta-1 chain from Homarus americanus (American lobster).